Consider the following 406-residue polypeptide: 4-hydroxy-3-methylbut-2-en-1-yl diphosphate synthase (ferredoxin) (406 aa).

C315, C318, C349, and E356 together coordinate [4Fe-4S] cluster.

The protein belongs to the IspG family. It depends on [4Fe-4S] cluster as a cofactor.

It catalyses the reaction (2E)-4-hydroxy-3-methylbut-2-enyl diphosphate + 2 oxidized [2Fe-2S]-[ferredoxin] + H2O = 2-C-methyl-D-erythritol 2,4-cyclic diphosphate + 2 reduced [2Fe-2S]-[ferredoxin] + H(+). It functions in the pathway isoprenoid biosynthesis; isopentenyl diphosphate biosynthesis via DXP pathway; isopentenyl diphosphate from 1-deoxy-D-xylulose 5-phosphate: step 5/6. Converts 2C-methyl-D-erythritol 2,4-cyclodiphosphate (ME-2,4cPP) into 1-hydroxy-2-methyl-2-(E)-butenyl 4-diphosphate. This Gloeothece citriformis (strain PCC 7424) (Cyanothece sp. (strain PCC 7424)) protein is 4-hydroxy-3-methylbut-2-en-1-yl diphosphate synthase (ferredoxin).